Reading from the N-terminus, the 704-residue chain is SH3KBP1-binding protein 1 (704 aa).

Ala-2 is subject to N-acetylalanine. The BTB domain occupies 19–88; it reads EVIHLNVGGK…LRTKELDPRG (70 aa). Residues 146-165 form a disordered region; that stretch reads VGPQQIGGRPAPVRRSNTMP. Thr-163 is subject to Phosphothreonine. 5 WD repeats span residues 233–280, 283–322, 324–359, 428–466, and 548–586; these read RLDW…GGSE, VFHLGVPVEALFFVGNQLIATSHTGRIGVWNAVTKHWQVQ, VQPITSYDAAGSFLLLGCSNGSIYYVDVQKFPLRMK, VHRSPVTKIMLSEKHLISVCADNNHVRTWSVTRFRGMIS, and LECEGSRRLGSRPRRYLLTGQANGSLAMWDLTTAMDGLG. The segment at 609-704 is disordered; sequence PLASSRGSFP…LKKTLNETSF (96 aa). A compositionally biased stretch (low complexity) spans 612–631; the sequence is SSRGSFPSPSPRTSLTSLHS. Residues 618–623 carry the PXXXPR motif; the sequence is PSPSPR. Ser-644 and Ser-646 each carry phosphoserine. The short motif at 678-683 is the PXXXPR element; it reads PTPAPR. Position 693 is a phosphothreonine (Thr-693).

This sequence belongs to the KCTD3 family. Monomer. Interacts with CUL3; interaction is direct and forms a 5:5 heterodecamer. Interacts (via PXXXPR motifs) with SH3KBP1 (via SH3 domains). Directly interacts with cathepsin B/CTSB.

The protein localises to the lysosome. Inhibits CBL-SH3KBP1 complex mediated down-regulation of EGFR signaling by sequestration of SH3KBP1. Binds to SH3KBP1 and prevents its interaction with CBL and inhibits translocation of SH3KBP1 to EGFR containing vesicles upon EGF stimulation. This Mus musculus (Mouse) protein is SH3KBP1-binding protein 1 (Shkbp1).